The following is a 195-amino-acid chain: Protein aq_1444 (195 aa).

The AMMECR1 domain maps to Met1–Arg191.

The chain is Protein aq_1444 from Aquifex aeolicus (strain VF5).